We begin with the raw amino-acid sequence, 410 residues long: Elongation factor Tu, chloroplastic (410 aa).

The tr-type G domain occupies 10–214 (KPHINIGTIG…QVDKYIPTPQ (205 aa)). The interval 19-26 (GHVDHGKT) is G1. Residue 19-26 (GHVDHGKT) coordinates GTP. Residue Thr-26 participates in Mg(2+) binding. Residues 60 to 64 (GITIN) are G2. The interval 81-84 (DCPG) is G3. GTP-binding positions include 81-85 (DCPGH) and 136-139 (NKED). The interval 136–139 (NKED) is G4. Positions 174–176 (SAL) are G5.

This sequence belongs to the TRAFAC class translation factor GTPase superfamily. Classic translation factor GTPase family. EF-Tu/EF-1A subfamily.

It is found in the plastid. The protein localises to the chloroplast. It catalyses the reaction GTP + H2O = GDP + phosphate + H(+). Functionally, GTP hydrolase that promotes the GTP-dependent binding of aminoacyl-tRNA to the A-site of ribosomes during protein biosynthesis. This Mesostigma viride (Green alga) protein is Elongation factor Tu, chloroplastic (tufA).